We begin with the raw amino-acid sequence, 385 residues long: 4-hydroxy-3-methylbut-2-en-1-yl diphosphate synthase (flavodoxin) (385 aa).

[4Fe-4S] cluster is bound by residues C282, C285, C317, and E324.

It belongs to the IspG family. [4Fe-4S] cluster is required as a cofactor.

It carries out the reaction (2E)-4-hydroxy-3-methylbut-2-enyl diphosphate + oxidized [flavodoxin] + H2O + 2 H(+) = 2-C-methyl-D-erythritol 2,4-cyclic diphosphate + reduced [flavodoxin]. Its pathway is isoprenoid biosynthesis; isopentenyl diphosphate biosynthesis via DXP pathway; isopentenyl diphosphate from 1-deoxy-D-xylulose 5-phosphate: step 5/6. Its function is as follows. Converts 2C-methyl-D-erythritol 2,4-cyclodiphosphate (ME-2,4cPP) into 1-hydroxy-2-methyl-2-(E)-butenyl 4-diphosphate. The sequence is that of 4-hydroxy-3-methylbut-2-en-1-yl diphosphate synthase (flavodoxin) from Nocardia farcinica (strain IFM 10152).